We begin with the raw amino-acid sequence, 411 residues long: Secretion apparatus protein BsaZ (411 aa).

4 helical membrane-spanning segments follow: residues 28–48, 80–100, 137–157, and 175–195; these read IVAL…VDLT, IAAP…LVQS, ALLY…LYHA, and IVLT…VLIL. Positions 341–411 are disordered; the sequence is AANRGGPPPE…APARTGDQNA (71 aa). Over residues 370–404 the composition is skewed to low complexity; sequence DACADNAFPDDAPPGAAAPNAGSPDGPAPDGGAPA.

Belongs to the type III secretion exporter family.

It localises to the cell membrane. Functionally, part of the bsa type III secretion system, is involved in the intracellular replication of invading bacteria inside the host cell. Probably necessary for the lysis of the vacuole membrane and escape into the host cell cytoplasm. This chain is Secretion apparatus protein BsaZ (bsaZ), found in Burkholderia pseudomallei (strain 1026b).